Consider the following 116-residue polypeptide: Ribosome-binding factor A (116 aa).

It belongs to the RbfA family. Monomer. Binds 30S ribosomal subunits, but not 50S ribosomal subunits or 70S ribosomes.

It is found in the cytoplasm. Its function is as follows. One of several proteins that assist in the late maturation steps of the functional core of the 30S ribosomal subunit. Associates with free 30S ribosomal subunits (but not with 30S subunits that are part of 70S ribosomes or polysomes). Required for efficient processing of 16S rRNA. May interact with the 5'-terminal helix region of 16S rRNA. This is Ribosome-binding factor A from Streptococcus pyogenes serotype M5 (strain Manfredo).